Reading from the N-terminus, the 76-residue chain is U7-lycotoxin-Ls1c (76 aa).

A signal peptide spans 1 to 22 (MKLIIFTGLALFLLVSLIDVEA). A propeptide spanning residues 23–26 (QNEG) is cleaved from the precursor.

Belongs to the neurotoxin 19 (CSTX) family. 07 (U7-Lctx) subfamily. Contains 4 disulfide bonds. In terms of tissue distribution, expressed by the venom gland.

The protein localises to the secreted. In Lycosa singoriensis (Wolf spider), this protein is U7-lycotoxin-Ls1c.